The sequence spans 259 residues: Proteasome subunit alpha (259 aa).

Belongs to the peptidase T1A family. As to quaternary structure, the 20S proteasome core is composed of 14 alpha and 14 beta subunits that assemble into four stacked heptameric rings, resulting in a barrel-shaped structure. The two inner rings, each composed of seven catalytic beta subunits, are sandwiched by two outer rings, each composed of seven alpha subunits. The catalytic chamber with the active sites is on the inside of the barrel. Has a gated structure, the ends of the cylinder being occluded by the N-termini of the alpha-subunits. Is capped at one or both ends by the proteasome regulatory ATPase, PAN.

It is found in the cytoplasm. Its activity is regulated as follows. The formation of the proteasomal ATPase PAN-20S proteasome complex, via the docking of the C-termini of PAN into the intersubunit pockets in the alpha-rings, triggers opening of the gate for substrate entry. Interconversion between the open-gate and close-gate conformations leads to a dynamic regulation of the 20S proteasome proteolysis activity. Functionally, component of the proteasome core, a large protease complex with broad specificity involved in protein degradation. The polypeptide is Proteasome subunit alpha (Methanococcus maripaludis (strain C6 / ATCC BAA-1332)).